Reading from the N-terminus, the 273-residue chain is MGRLENKTAVITGAATGIGQATAEVFANEGARVIIGDINKDQMEETVDAIRKNGGQAESFHLDVSDENSVKAFADQIKDACGTIDILFNNAGVDQEGGKVHEYPVDLFDRIIAVDLRGTFLCSKYLIPLMLENGGSIINTSSMSGRAADLDRSGYNAAKGGITNLTKAMAIDYARNGIRVNSISPGTIETPLIDKLAGTKEQEMGEQFREANKWITPLGRLGQPKEMATVALFLASDDSSYVTGEDITADGGIMAYTWPGKMLIEEKWKEETK.

Position 10–34 (10–34) interacts with NAD(+); it reads VITGAATGIGQATAEVFANEGARVI. Serine 142 is a substrate binding site. Tyrosine 155 serves as the catalytic Proton acceptor.

Belongs to the short-chain dehydrogenases/reductases (SDR) family.

This is an uncharacterized protein from Bacillus subtilis (strain 168).